A 384-amino-acid chain; its full sequence is BarH-like 2 homeobox protein (384 aa).

Disordered stretches follow at residues 1 to 134, 154 to 237, and 364 to 384; these read MTAM…APRT, CAPY…TAFS, and PGGQPALNPLSNPIPGTPHPR. Low complexity predominate over residues 119 to 134; it reads QSAAQQLGSAAAAPRT. The segment covering 177-217 has biased composition (basic and acidic residues); sequence ESFRPKLEQEDSKTKLDKREDSQSDIKCHGTKEEGDREITS. A DNA-binding region (homeobox) is located at residues 229-288; the sequence is PRKARTAFSDHQLNQLERSFERQKYLSVQDRMDLAAALNLTDTQVKTWYQNRRTKWKRQT.

The protein belongs to the BAR homeobox family. In terms of tissue distribution, expressed in the ganglion cell layer of the retina in the eye and in the ventral zone of the dorsal thalamus of the CNS.

The protein resides in the nucleus. Functionally, potential regulator of neural basic helix-loop-helix genes. It may down-regulate expression of ASCL1 and, within the thalamus, up-regulate NGN2, thereby regulating distinct patterns of neuronal differentiation. The polypeptide is BarH-like 2 homeobox protein (Barhl2) (Rattus norvegicus (Rat)).